The primary structure comprises 464 residues: ERO1-like protein alpha (464 aa).

A signal peptide spans 1 to 23; it reads MGRAWGLLVGLLGVVWLLRLGHG. 8 disulfide bridges follow: C35/C48, C37/C46, C85/C387, C94/C99, C94/C130, C99/C104, C207/C237, and C390/C393. Phosphoserine is present on residues S106, S142, and S144. The FAD site is built by R186, T188, and W199. Residues S248 and H251 each contribute to the FAD site. N-linked (GlcNAc...) asparagine glycosylation is present at N276. FAD is bound by residues R283 and R296. A glycan (N-linked (GlcNAc...) asparagine) is linked at N380.

This sequence belongs to the EROs family. Predominantly monomer. May function both as a monomer and a homodimer. Interacts with PDILT. Interacts with ERP44; the interaction results in retention of ERO1A in the endoplasmic reticulum. It depends on FAD as a cofactor. N-glycosylated. In terms of processing, the Cys-94/Cys-99 and Cys-390/Cys-393 disulfide bonds constitute the redox-active center. The Cys-94/Cys-99 disulfide bond may accept electron from P4HB and funnel them to the active site disulfide Cys-390/Cys-393. The regulatory Cys-99/Cys-104 disulfide bond stabilizes the other regulatory bond Cys-94/Cys-130. Post-translationally, phosphorylated on Ser-144 by FAM20C in the Golgi which increases its enzymatic activity. Phosphorylation is induced by lactation. It is also induced by hypoxia and reductive stress. As to expression, widely expressed (at protein level). In the mammary gland, expressed at higher levels in lactating mice than in virgin mice (at protein level).

Its subcellular location is the endoplasmic reticulum membrane. It is found in the golgi apparatus lumen. It localises to the secreted. The protein resides in the cell projection. The protein localises to the dendrite. With respect to regulation, enzyme activity is tightly regulated to prevent the accumulation of reactive oxygen species in the endoplasmic reticulum. Reversibly down-regulated by the formation of disulfide bonds between the active site Cys-94 and Cys-130, and between Cys-99 and Cys-104. Glutathione may be required to regulate its activity in the endoplasmic reticulum. Oxidoreductase involved in disulfide bond formation in the endoplasmic reticulum. Efficiently reoxidizes P4HB/PDI, the enzyme catalyzing protein disulfide formation, in order to allow P4HB to sustain additional rounds of disulfide formation. Following P4HB reoxidation, passes its electrons to molecular oxygen via FAD, leading to the production of reactive oxygen species (ROS) in the cell. Required for the proper folding of immunoglobulins. Plays an important role in ER stress-induced, CHOP-dependent apoptosis by activating the inositol 1,4,5-trisphosphate receptor IP3R1. The chain is ERO1-like protein alpha from Mus musculus (Mouse).